The primary structure comprises 84 residues: Small ribosomal subunit protein uS17 (84 aa).

The protein belongs to the universal ribosomal protein uS17 family. In terms of assembly, part of the 30S ribosomal subunit.

Functionally, one of the primary rRNA binding proteins, it binds specifically to the 5'-end of 16S ribosomal RNA. The polypeptide is Small ribosomal subunit protein uS17 (Clostridium botulinum (strain Okra / Type B1)).